A 37-amino-acid polypeptide reads, in one-letter code: Esculentin-2SE (37 aa).

A disulfide bond links Cys31 and Cys37.

As to expression, expressed by the skin glands.

It is found in the secreted. Its function is as follows. Mast cell degranulating peptide. Causes histamine release from rat peritoneal mast cells in vitro. Has antibacterial activity against the Gram-negative bacterium E.coli K12 and Gram-positive bacterium M.luteus NCT C2665. This Lithobates sevosus (Dusky gopher frog) protein is Esculentin-2SE.